A 612-amino-acid polypeptide reads, in one-letter code: Large ribosomal subunit assembly factor BipA (612 aa).

The 196-residue stretch at 5–200 (NDLRNIAIIA…TIIKHVPAPV (196 aa)) folds into the tr-type G domain. GTP is bound by residues 17-22 (DHGKTT) and 130-133 (NKID).

The protein belongs to the TRAFAC class translation factor GTPase superfamily. Classic translation factor GTPase family. BipA subfamily. In terms of assembly, monomer.

Its subcellular location is the cytoplasm. The enzyme catalyses GTP + H2O = GDP + phosphate + H(+). Its function is as follows. A 50S ribosomal subunit assembly protein with GTPase activity, required for 50S subunit assembly at low temperatures, may also play a role in translation. Binds GTP and analogs. Binds the 70S ribosome between the 30S and 50S subunits, in a similar position as ribosome-bound EF-G; it contacts a number of ribosomal proteins, both rRNAs and the A-site tRNA. This chain is Large ribosomal subunit assembly factor BipA, found in Bacillus subtilis (strain 168).